A 360-amino-acid chain; its full sequence is uncharacterized protein (360 aa).

The ABC transporter domain maps to 4–235 (LSLQHIQKIY…PANMFVAGFI (232 aa)). 37-44 (GPSGCGKS) contributes to the ATP binding site.

Belongs to the ABC transporter superfamily.

This is an uncharacterized protein from Escherichia coli O6:H1 (strain CFT073 / ATCC 700928 / UPEC).